The following is a 167-amino-acid chain: Signal peptidase complex subunit 2 (167 aa).

Residues 1 to 36 (MPKYNVSDFKSKFDKELTNHFNKNGYKQSFVFEDIR) are Cytoplasmic-facing. The helical transmembrane segment at 37-57 (LLIAIACIIPAGLAFGIEYVY) threads the bilayer. The Lumenal segment spans residues 58 to 68 (GFGVLKSYLKY). A helical membrane pass occupies residues 69 to 89 (LLPLYFLASCLLTFWSSVVKG). Over 90 to 167 (STVYVATKKE…ISKYLSQIEN (78 aa)) the chain is Cytoplasmic.

This sequence belongs to the SPCS2 family. Component of the signal peptidase complex (SPC) composed of a catalytic subunit sec11 and three accessory subunits spc1, spc2 and spc3. The complex induces a local thinning of the ER membrane which is used to measure the length of the signal peptide (SP) h-region of protein substrates. This ensures the selectivity of the complex towards h-regions shorter than 18-20 amino acids. SPC associates with the translocon complex.

Its subcellular location is the endoplasmic reticulum membrane. Component of the signal peptidase complex (SPC) which catalyzes the cleavage of N-terminal signal sequences from nascent proteins as they are translocated into the lumen of the endoplasmic reticulum. Enhances the enzymatic activity of SPC and facilitates the interactions between different components of the translocation site. The polypeptide is Signal peptidase complex subunit 2 (spc2) (Schizosaccharomyces pombe (strain 972 / ATCC 24843) (Fission yeast)).